We begin with the raw amino-acid sequence, 171 residues long: Small ribosomal subunit protein uS13 (171 aa).

Disordered regions lie at residues 1-22 and 142-171; these read MGKA…AAKK and RHEK…RKKE. The span at 10 to 22 shows a compositional bias: basic and acidic residues; it reads KSDKEAAKPAAKK. The span at 142–158 shows a compositional bias: basic residues; the sequence is RHEKGKKVRGQRTRSNG.

The protein belongs to the universal ribosomal protein uS13 family. As to quaternary structure, part of the 30S ribosomal subunit. Forms a loose heterodimer with protein S19. Forms two bridges to the 50S subunit in the 70S ribosome.

Functionally, located at the top of the head of the 30S subunit, it contacts several helices of the 16S rRNA. In the 70S ribosome it contacts the 23S rRNA (bridge B1a) and protein L5 of the 50S subunit (bridge B1b), connecting the 2 subunits; these bridges are implicated in subunit movement. This Thermoplasma volcanium (strain ATCC 51530 / DSM 4299 / JCM 9571 / NBRC 15438 / GSS1) protein is Small ribosomal subunit protein uS13.